The following is a 525-amino-acid chain: Bifunctional purine biosynthesis protein PurH (525 aa).

Positions 1–149 constitute an MGS-like domain; that stretch reads MSDPVIKRAL…KNNESVTVVT (149 aa).

The protein belongs to the PurH family.

The catalysed reaction is (6R)-10-formyltetrahydrofolate + 5-amino-1-(5-phospho-beta-D-ribosyl)imidazole-4-carboxamide = 5-formamido-1-(5-phospho-D-ribosyl)imidazole-4-carboxamide + (6S)-5,6,7,8-tetrahydrofolate. The enzyme catalyses IMP + H2O = 5-formamido-1-(5-phospho-D-ribosyl)imidazole-4-carboxamide. It participates in purine metabolism; IMP biosynthesis via de novo pathway; 5-formamido-1-(5-phospho-D-ribosyl)imidazole-4-carboxamide from 5-amino-1-(5-phospho-D-ribosyl)imidazole-4-carboxamide (10-formyl THF route): step 1/1. The protein operates within purine metabolism; IMP biosynthesis via de novo pathway; IMP from 5-formamido-1-(5-phospho-D-ribosyl)imidazole-4-carboxamide: step 1/1. This is Bifunctional purine biosynthesis protein PurH from Pelodictyon phaeoclathratiforme (strain DSM 5477 / BU-1).